Reading from the N-terminus, the 311-residue chain is Malate dehydrogenase (311 aa).

Residues 10–15 (GAGRVG) and Asp35 each bind NAD(+). Substrate contacts are provided by Arg84 and Arg90. Residues Asn97 and 120-122 (VTN) contribute to the NAD(+) site. Positions 122 and 153 each coordinate substrate. Catalysis depends on His177, which acts as the Proton acceptor.

The protein belongs to the LDH/MDH superfamily. MDH type 3 family.

It carries out the reaction (S)-malate + NAD(+) = oxaloacetate + NADH + H(+). Catalyzes the reversible oxidation of malate to oxaloacetate. The chain is Malate dehydrogenase from Nitrosococcus oceani (strain ATCC 19707 / BCRC 17464 / JCM 30415 / NCIMB 11848 / C-107).